A 378-amino-acid polypeptide reads, in one-letter code: TelA-like protein SAUSA300_1299 (378 aa).

It belongs to the TelA family.

The chain is TelA-like protein SAUSA300_1299 from Staphylococcus aureus (strain USA300).